The sequence spans 967 residues: Vacuolar membrane protease (967 aa).

Residues 1–16 (MARPSLSRSNPLGFTP) are Cytoplasmic-facing. A helical membrane pass occupies residues 17–37 (WPVTVITAVVYLALVVPLLVV). Topologically, residues 38–387 (HHVVPSAPSS…SAFVVFELHT (350 aa)) are vacuolar. 2 N-linked (GlcNAc...) asparagine glycosylation sites follow: Asn-53 and Asn-119. Zn(2+) contacts are provided by His-171 and Asp-183. The Proton acceptor role is filled by Glu-217. Zn(2+)-binding residues include Glu-218, Glu-243, and His-316. Residues 388–408 (LFALSVTLLVVAPLVLLVTSI) traverse the membrane as a helical segment. Over 409–441 (ALNRADKMYLFRASASPEDSDGSEAVLLHGVRG) the chain is Cytoplasmic. A helical transmembrane segment spans residues 442–462 (FFRFPFLLVIPTAVTVGLAYL). Topologically, residues 463-472 (VTKFNPYIIH) are vacuolar. The helical transmembrane segment at 473-493 (SSEYAVWSMMISAWVFLAWFV) threads the bilayer. The Cytoplasmic segment spans residues 494 to 507 (SRVADFARPSAFHR). A helical membrane pass occupies residues 508–528 (VYTLTWLFLVEWVLLVISTVY). At 529-532 (ENKY) the chain is on the vacuolar side. The chain crosses the membrane as a helical span at residues 533–553 (GLAGGYFVFFAFAGTFLATWI). Residues 554-663 (SYLELFALPR…WSIHLPKWVW (110 aa)) are Cytoplasmic-facing. The disordered stretch occupies residues 579 to 612 (SSHGSRLGTASGEDVEDGEDEDEDDDGTTAEATE). Over residues 591–606 (EDVEDGEDEDEDDDGT) the composition is skewed to acidic residues. Residues 664-684 (VLQFLLTAPLVLTFVGPLALL) traverse the membrane as a helical segment. Over 685-700 (LTSALRQTGQDGSSSL) the chain is Vacuolar. Residues 701–721 (FIYIAVAALTTLLFIPLLPFI) form a helical membrane-spanning segment. Residues 722 to 727 (HRYTHH) are Cytoplasmic-facing. Residues 728 to 748 (IPLFLLCVFAGTLIYNLVAFP) form a helical membrane-spanning segment. At 749-967 (FSPANRLKLF…LVEGSRRFEI (219 aa)) the chain is on the vacuolar side. N-linked (GlcNAc...) asparagine glycans are attached at residues Asn-795 and Asn-832.

This sequence belongs to the peptidase M28 family. Requires Zn(2+) as cofactor.

The protein resides in the vacuole membrane. Functionally, may be involved in vacuolar sorting and osmoregulation. The polypeptide is Vacuolar membrane protease (Neosartorya fischeri (strain ATCC 1020 / DSM 3700 / CBS 544.65 / FGSC A1164 / JCM 1740 / NRRL 181 / WB 181) (Aspergillus fischerianus)).